We begin with the raw amino-acid sequence, 216 residues long: Endoplasmic reticulum vesicle protein 25 (216 aa).

A signal peptide spans 1 to 25 (MGSSRLAMRSALGLFFLLFVQISLA). The Lumenal portion of the chain corresponds to 26 to 185 (LKFDIAAGKG…TNESTNERVK (160 aa)). The GOLD domain maps to 36–126 (ERCIRNFVLK…HRSIELDVDI (91 aa)). A helical membrane pass occupies residues 186 to 206 (WFAFGTMGMLVGLGVWQVIYL). At 207-216 (RAYFRSKHLI) the chain is on the cytoplasmic side.

It belongs to the EMP24/GP25L family.

It localises to the endoplasmic reticulum membrane. Its subcellular location is the golgi apparatus membrane. Its function is as follows. Constituent of COPII-coated endoplasmic reticulum-derived transport vesicles. Required for efficient transport of a subset of secretory proteins to the Golgi. Facilitates retrograde transport from the Golgi to the endoplasmic reticulum. This chain is Endoplasmic reticulum vesicle protein 25 (erv25), found in Emericella nidulans (strain FGSC A4 / ATCC 38163 / CBS 112.46 / NRRL 194 / M139) (Aspergillus nidulans).